Reading from the N-terminus, the 434-residue chain is Histidinol dehydrogenase (434 aa).

NAD(+)-binding residues include Tyr130, Gln188, and Asn211. 3 residues coordinate substrate: Ser237, Gln259, and His262. Zn(2+)-binding residues include Gln259 and His262. Active-site proton acceptor residues include Glu326 and His327. 4 residues coordinate substrate: His327, Asp360, Glu414, and His419. Residue Asp360 coordinates Zn(2+). Zn(2+) is bound at residue His419.

The protein belongs to the histidinol dehydrogenase family. As to quaternary structure, homodimer. Zn(2+) serves as cofactor.

The catalysed reaction is L-histidinol + 2 NAD(+) + H2O = L-histidine + 2 NADH + 3 H(+). It participates in amino-acid biosynthesis; L-histidine biosynthesis; L-histidine from 5-phospho-alpha-D-ribose 1-diphosphate: step 9/9. Catalyzes the sequential NAD-dependent oxidations of L-histidinol to L-histidinaldehyde and then to L-histidine. The polypeptide is Histidinol dehydrogenase (Salmonella paratyphi A (strain ATCC 9150 / SARB42)).